We begin with the raw amino-acid sequence, 504 residues long: Lysine--tRNA ligase (504 aa).

Mg(2+) contacts are provided by E411 and E418.

It belongs to the class-II aminoacyl-tRNA synthetase family. As to quaternary structure, homodimer. It depends on Mg(2+) as a cofactor.

Its subcellular location is the cytoplasm. The catalysed reaction is tRNA(Lys) + L-lysine + ATP = L-lysyl-tRNA(Lys) + AMP + diphosphate. In Clostridium botulinum (strain Okra / Type B1), this protein is Lysine--tRNA ligase.